A 506-amino-acid polypeptide reads, in one-letter code: Dolichyl pyrophosphate Glc1Man9GlcNAc2 alpha-1,3-glucosyltransferase (506 aa).

Transmembrane regions (helical) follow at residues 10–30, 101–121, 133–153, 176–196, 219–239, 261–281, 305–325, 339–359, 384–401, 406–426, 454–474, and 479–499; these read RLLLWFFAVATAVKLLLIPSS, VIYFQRISVIVSDLCLLYGVY, NLICALVIWSPGLLIVDHIHF, LLGGFLFAVLLCFKHLFAVTA, LVTIGAVVVAVFAAAYGPFIY, YWAPNFWVFYIILDKGLAVLL, PFAVLPQITPLTTFAMVLLAI, GLVARWVAYAYTCGFLFGWHV, HYFLVSIVSCYSLYPLLY, YPIKVLLLLLHSVVMWLGFAA, YLMGLIIVEIVSQFLHPYFLG, and FLPLMLISTYCTVGIMYSWIW.

This sequence belongs to the ALG6/ALG8 glucosyltransferase family.

It is found in the endoplasmic reticulum membrane. It carries out the reaction an alpha-D-Glc-(1-&gt;3)-alpha-D-Man-(1-&gt;2)-alpha-D-Man-(1-&gt;2)-alpha-D-Man-(1-&gt;3)-[alpha-D-Man-(1-&gt;2)-alpha-D-Man-(1-&gt;3)-[alpha-D-Man-(1-&gt;2)-alpha-D-Man-(1-&gt;6)]-alpha-D-Man-(1-&gt;6)]-beta-D-Man-(1-&gt;4)-beta-D-GlcNAc-(1-&gt;4)-alpha-D-GlcNAc-diphospho-di-trans,poly-cis-dolichol + a di-trans,poly-cis-dolichyl beta-D-glucosyl phosphate = an alpha-D-Glc-(1-&gt;3)-alpha-D-Glc-(1-&gt;3)-alpha-D-Man-(1-&gt;2)-alpha-D-Man-(1-&gt;2)-alpha-D-Man-(1-&gt;3)-[alpha-D-Man-(1-&gt;2)-alpha-D-Man-(1-&gt;3)-[alpha-D-Man-(1-&gt;2)-alpha-D-Man-(1-&gt;6)]-alpha-D-Man-(1-&gt;6)]-beta-D-Man-(1-&gt;4)-beta-D-GlcNAc-(1-&gt;4)-alpha-D-GlcNAc-diphospho-di-trans,poly-cis-dolichol + a di-trans,poly-cis-dolichyl phosphate + H(+). It functions in the pathway protein modification; protein glycosylation. Functionally, dolichyl pyrophosphate Glc1Man9GlcNAc2 alpha-1,3-glucosyltransferase that operates in the biosynthetic pathway of dolichol-linked oligosaccharides, the glycan precursors employed in protein asparagine (N)-glycosylation. The assembly of dolichol-linked oligosaccharides begins on the cytosolic side of the endoplasmic reticulum membrane and finishes in its lumen. The sequential addition of sugars to dolichol pyrophosphate produces dolichol-linked oligosaccharides containing fourteen sugars, including two GlcNAcs, nine mannoses and three glucoses. Once assembled, the oligosaccharide is transferred from the lipid to nascent proteins by oligosaccharyltransferases. In the lumen of the endoplasmic reticulum, adds the second glucose residue from dolichyl phosphate glucose (Dol-P-Glc) onto the lipid-linked oligosaccharide intermediate Glc(1)Man(9)GlcNAc(2)-PP-Dol to produce Glc(2)Man(9)GlcNAc(2)-PP-Dol. In Arabidopsis thaliana (Mouse-ear cress), this protein is Dolichyl pyrophosphate Glc1Man9GlcNAc2 alpha-1,3-glucosyltransferase.